A 90-amino-acid chain; its full sequence is Small ribosomal subunit protein bS20 (90 aa).

Belongs to the bacterial ribosomal protein bS20 family.

Functionally, binds directly to 16S ribosomal RNA. In Fusobacterium nucleatum subsp. nucleatum (strain ATCC 25586 / DSM 15643 / BCRC 10681 / CIP 101130 / JCM 8532 / KCTC 2640 / LMG 13131 / VPI 4355), this protein is Small ribosomal subunit protein bS20.